A 397-amino-acid chain; its full sequence is Multidrug resistance protein MdtH (397 aa).

A run of 11 helical transmembrane segments spans residues 11-31, 32-52, 71-91, 94-114, 137-157, 163-183, 211-231, 242-262, 291-311, 340-360, and 366-386; these read WFLA…MPMI, SLRF…ALGL, FGAR…FASL, AQSG…GCLF, LLMM…SWLL, YVCL…LLIL, LVLI…IFPI, AVGW…YPLA, FANT…GIVI, LALG…YAML, and LPWL…VNCF.

The protein belongs to the major facilitator superfamily. DHA1 family. MdtH (TC 2.A.1.2.21) subfamily.

It is found in the cell inner membrane. This chain is Multidrug resistance protein MdtH, found in Aeromonas hydrophila subsp. hydrophila (strain ATCC 7966 / DSM 30187 / BCRC 13018 / CCUG 14551 / JCM 1027 / KCTC 2358 / NCIMB 9240 / NCTC 8049).